Here is a 193-residue protein sequence, read N- to C-terminus: Calcium-binding protein E63-1 (193 aa).

EF-hand domains lie at 35–70, 71–106, 127–162, and 163–193; these read VEIK…LGIN, VSDE…IQAL, DVTE…IGEP, and LNEQ…RLLL. Residues aspartate 48, asparagine 50, aspartate 52, arginine 54, and glutamate 59 each coordinate Ca(2+). Residues aspartate 140, aspartate 142, asparagine 144, glutamate 151, aspartate 176, aspartate 178, aspartate 180, arginine 182, and glutamate 187 each contribute to the Ca(2+) site.

The chain is Calcium-binding protein E63-1 (Eip63F-1) from Drosophila melanogaster (Fruit fly).